The following is a 449-amino-acid chain: UDP-N-acetylmuramate--L-alanine ligase (449 aa).

Residue 121–127 (GAHGKSS) coordinates ATP.

This sequence belongs to the MurCDEF family.

Its subcellular location is the cytoplasm. The catalysed reaction is UDP-N-acetyl-alpha-D-muramate + L-alanine + ATP = UDP-N-acetyl-alpha-D-muramoyl-L-alanine + ADP + phosphate + H(+). Its pathway is cell wall biogenesis; peptidoglycan biosynthesis. Its function is as follows. Cell wall formation. The protein is UDP-N-acetylmuramate--L-alanine ligase of Helicobacter pylori (strain ATCC 700392 / 26695) (Campylobacter pylori).